Here is a 184-residue protein sequence, read N- to C-terminus: MNWQSEWLRVEPIMGSRRISNFCWACITSLGALGFFLVGIPSYLGKDLIPVLPSQQIVFVPQGIVMCFYGIAGLFPSFYLWCTILWNVGSGYNIFDKREGIICLFRWGFPGENRRICIRFSMKDIQAIRVEVREAISPRRVLHMKVKGQQDVPLTRISENLTLREMEEKAAELARFLHVSMEGP.

2 helical membrane-spanning segments follow: residues 22 to 42 and 64 to 84; these read FCWACITSLGALGFFLVGIPS and IVMCFYGIAGLFPSFYLWCTI.

It belongs to the Ycf4 family.

It localises to the plastid. It is found in the chloroplast thylakoid membrane. Seems to be required for the assembly of the photosystem I complex. This Huperzia lucidula (Shining clubmoss) protein is Photosystem I assembly protein Ycf4.